An 87-amino-acid chain; its full sequence is RNA-binding protein Hfq (87 aa).

In terms of domain architecture, Sm spans 9–68 (DPFLNTLRRERIPVSIYLVNGIKLQGYIESFDQFVILLKNSISQMIYKHAISTVVPNHTN). The segment at 66-87 (HTNNQEHNQSQYNNNNACISKP) is disordered.

This sequence belongs to the Hfq family. Homohexamer.

In terms of biological role, RNA chaperone that binds small regulatory RNA (sRNAs) and mRNAs to facilitate mRNA translational regulation in response to envelope stress, environmental stress and changes in metabolite concentrations. Also binds with high specificity to tRNAs. This is RNA-binding protein Hfq from Wigglesworthia glossinidia brevipalpis.